The following is a 160-amino-acid chain: Ubiquitin-conjugating enzyme E2 16 (160 aa).

A UBC core domain is found at 3 to 153; the sequence is SSIKRLHKEY…VRCTTYLYAK (151 aa). Cysteine 90 functions as the Glycyl thioester intermediate in the catalytic mechanism.

This sequence belongs to the ubiquitin-conjugating enzyme family.

It carries out the reaction S-ubiquitinyl-[E1 ubiquitin-activating enzyme]-L-cysteine + [E2 ubiquitin-conjugating enzyme]-L-cysteine = [E1 ubiquitin-activating enzyme]-L-cysteine + S-ubiquitinyl-[E2 ubiquitin-conjugating enzyme]-L-cysteine.. It participates in protein modification; protein ubiquitination. Functionally, catalyzes the covalent attachment of ubiquitin to other proteins. The polypeptide is Ubiquitin-conjugating enzyme E2 16 (ubc16) (Schizosaccharomyces pombe (strain 972 / ATCC 24843) (Fission yeast)).